The chain runs to 542 residues: Chaperonin GroEL (542 aa).

ATP-binding positions include 29–32 (TLGP), Lys50, 86–90 (DGTTT), Gly415, and Asp495.

It belongs to the chaperonin (HSP60) family. Forms a cylinder of 14 subunits composed of two heptameric rings stacked back-to-back. Interacts with the co-chaperonin GroES.

The protein resides in the cytoplasm. The enzyme catalyses ATP + H2O + a folded polypeptide = ADP + phosphate + an unfolded polypeptide.. Its function is as follows. Together with its co-chaperonin GroES, plays an essential role in assisting protein folding. The GroEL-GroES system forms a nano-cage that allows encapsulation of the non-native substrate proteins and provides a physical environment optimized to promote and accelerate protein folding. The chain is Chaperonin GroEL from Azobacteroides pseudotrichonymphae genomovar. CFP2.